Reading from the N-terminus, the 314-residue chain is Ribosome maturation factor RimP (314 aa).

3 disordered regions span residues 1 to 20 (MDLD…QPLS), 152 to 176 (PIEA…AKPE), and 206 to 314 (AAKA…PAPK). Residues 10 to 19 (PSAQVGQQPL) show a composition bias toward polar residues. The span at 215–227 (DGNNEEQDEEQEE) shows a compositional bias: acidic residues. The segment covering 247–256 (PEHNPAQNPI) has biased composition (polar residues). Basic and acidic residues-rich tracts occupy residues 270-279 (TEFKKSKTGE) and 303-314 (SGHDMPRKPAPK).

It belongs to the RimP family.

The protein resides in the cytoplasm. Functionally, required for maturation of 30S ribosomal subunits. This is Ribosome maturation factor RimP from Beijerinckia indica subsp. indica (strain ATCC 9039 / DSM 1715 / NCIMB 8712).